The primary structure comprises 431 residues: Dihydroorotase (431 aa).

Residues histidine 59 and histidine 61 each coordinate Zn(2+). Substrate is bound by residues 61–63 and asparagine 93; that span reads HLR. Residues aspartate 151, histidine 178, histidine 231, and aspartate 304 each contribute to the Zn(2+) site. The active site involves aspartate 304. Substrate contacts are provided by residues histidine 308 and 322-323; that span reads FG.

Belongs to the metallo-dependent hydrolases superfamily. DHOase family. Class I DHOase subfamily. The cofactor is Zn(2+).

It catalyses the reaction (S)-dihydroorotate + H2O = N-carbamoyl-L-aspartate + H(+). It participates in pyrimidine metabolism; UMP biosynthesis via de novo pathway; (S)-dihydroorotate from bicarbonate: step 3/3. In terms of biological role, catalyzes the reversible cyclization of carbamoyl aspartate to dihydroorotate. This is Dihydroorotase from Thermoanaerobacter sp. (strain X514).